Reading from the N-terminus, the 553-residue chain is Hydroxylamine reductase (553 aa).

Cysteine 3, cysteine 6, cysteine 18, and cysteine 25 together coordinate [2Fe-2S] cluster. 8 residues coordinate hybrid [4Fe-2O-2S] cluster: histidine 252, glutamate 276, cysteine 320, cysteine 408, cysteine 436, cysteine 461, glutamate 495, and lysine 497. At cysteine 408 the chain carries Cysteine persulfide.

Belongs to the HCP family. The cofactor is [2Fe-2S] cluster. Hybrid [4Fe-2O-2S] cluster serves as cofactor.

It localises to the cytoplasm. The enzyme catalyses A + NH4(+) + H2O = hydroxylamine + AH2 + H(+). Catalyzes the reduction of hydroxylamine to form NH(3) and H(2)O. This is Hydroxylamine reductase from Vibrio vulnificus (strain YJ016).